Reading from the N-terminus, the 832-residue chain is Mechanosensitive cation channel TMEM63B (832 aa).

Over 1–40 (MLPFLLATLGTTALNNSNPKDYCYSARIRSTVLQGLPFGG) the chain is Extracellular. The chain crosses the membrane as a helical span at residues 41 to 65 (VPTVLALDFMCFLALLFLFSILRKV). Residue cysteine 51 is the site of S-palmitoyl cysteine attachment. Residues 66 to 145 (AWDYGRLALV…KDDEIRDKCG (80 aa)) lie on the Cytoplasmic side of the membrane. Positions 86 to 88 (RDR) match the Mediates endoplasmic reticulum retention motif. A phosphoserine mark is found at serine 111, serine 113, serine 114, and serine 115. A lipid anchor (S-palmitoyl cysteine) is attached at cysteine 126. A helical transmembrane segment spans residues 146 to 178 (GDAVHYLSFQRHIIGLLVVVGVLSVGIVLPVNF). Residues 179–202 (SGDLLENNAYSFGRTTIANLKSGN) lie on the Extracellular side of the membrane. A helical transmembrane segment spans residues 203–227 (NLLWLHTSFAFLYLLLTVYSMRRHT). Over 228–427 (SKMRYKEDDL…IYWEHLSIRG (200 aa)) the chain is Cytoplasmic. Residues 231–426 (RYKEDDLVKR…NIYWEHLSIR (196 aa)) are intracellular linker IL2; confers mechanosensitivity. 2 S-palmitoyl cysteine lipidation sites follow: cysteine 382 and cysteine 398. Residues 428 to 457 (FIWWLRCLVINVVLFILLFFLTTPAIIITT) form a helical membrane-spanning segment. Topologically, residues 458–472 (MDKFNVTKPVEYLNN) are extracellular. The N-linked (GlcNAc...) asparagine glycan is linked to asparagine 462. Residues 473-502 (PIITQFFPTLLLWCFSALLPTIVYYSAFFE) traverse the membrane as a helical segment. At 503-506 (AHWT) the chain is on the cytoplasmic side. The chain crosses the membrane as a helical span at residues 507 to 543 (RSGENRTTMHKCYTFLIFMVLLLPSLGLSSLDLFFRW). Over 544–566 (LFDKKFLAEAAIRFECVFLPDNG) the chain is Extracellular. A helical membrane pass occupies residues 567–599 (AFFVNYVIASAFIGNAMDLLRIPGLLMYMIRLC). Residues 567–599 (AFFVNYVIASAFIGNAMDLLRIPGLLMYMIRLC) are gating helix. The Cytoplasmic segment spans residues 600-619 (LARSAAERRNVKRHQAYEFQ). The chain crosses the membrane as a helical span at residues 620-638 (FGAAYAWMMCVFTVVMTYS). Residues 639 to 641 (ITC) lie on the Extracellular side of the membrane. The helical transmembrane segment at 642–666 (PIIVPFGLMYMLLKHLVDRYNLYYA) threads the bilayer. The Cytoplasmic portion of the chain corresponds to 667–673 (YLPAKLD). A helical membrane pass occupies residues 674-702 (KKIHSGAVNQVVAAPILCLFWLLFFSTMR). Residues 703-707 (TGFLA) are Extracellular-facing. The chain crosses the membrane as a helical span at residues 708 to 728 (PTSMFTFVVLVITIVICLCHV). Residues cysteine 726 and cysteine 729 are each lipidated (S-palmitoyl cysteine). Topologically, residues 729 to 832 (CFGHFKYLSA…DSLIENEIHQ (104 aa)) are cytoplasmic. Residues 780–814 (EVDGDGDGAPGSSGDEPPSSSSQDEELLMPPDALT) form a disordered region. Positions 789-801 (PGSSGDEPPSSSS) are enriched in low complexity.

The protein belongs to the CSC1 (TC 1.A.17) family. In terms of assembly, monomer. Interacts with SLC19A2; interaction is required for the phospholipid scramblase activity. In terms of processing, palmitoylation is required for localization to the plasma membrane and stability. Post-translationally, N-Glycosylated.

It localises to the cell membrane. The protein localises to the endoplasmic reticulum membrane. The protein resides in the lysosome membrane. Its subcellular location is the early endosome membrane. The enzyme catalyses Ca(2+)(in) = Ca(2+)(out). The catalysed reaction is Mg(2+)(in) = Mg(2+)(out). It carries out the reaction K(+)(in) = K(+)(out). It catalyses the reaction Na(+)(in) = Na(+)(out). The enzyme catalyses Cs(+)(in) = Cs(+)(out). The catalysed reaction is a 1,2-diacyl-sn-glycero-3-phosphocholine(in) = a 1,2-diacyl-sn-glycero-3-phosphocholine(out). It carries out the reaction a sphingomyelin(in) = a sphingomyelin(out). Its function is as follows. Mechanosensitive cation channel with low conductance and high activation threshold. Osmosensitive cation channel preferentially activated by hypotonic stress. Also acts as a phospholipid scramblase in response to changes in membrane structure: upon changes in membrane curvature and thickness, alters its conformation and translocates phospholipids, such as phosphatidylcholine and sphingomyelin, thereby controlling plasma membrane lipid distribution. Forms a heterodimer with SLC19A2, which mediates phospholipid scramblase activity following Ca(2+) stimulation. Expressed in excitatory neurons of the subfornical organ and functions as a thirst receptor that mediates neuronal response to hyperosmolality to drive thirst and drinking behavior. Facilitates intestinal motility by promoting proliferation of intestinal stem cells. Essential for the baby's first breath and respiration throughout life. Upon lung inflation conducts cation currents in alveolar type 1 and 2 cells triggering lamellar body exocytosis and surfactant secretion into airspace. Acts as an osmosensor in cochlear outer hair cells (OHCs) where it mediates calcium influx and regulatory volume decrease response. Required for the maintenance of OHC morphology, OHC survival and normal hearing. This is Mechanosensitive cation channel TMEM63B from Homo sapiens (Human).